A 249-amino-acid polypeptide reads, in one-letter code: tRNA pseudouridine synthase A (249 aa).

The active-site Nucleophile is the aspartate 53. Tyrosine 111 serves as a coordination point for substrate.

The protein belongs to the tRNA pseudouridine synthase TruA family. Homodimer.

The catalysed reaction is uridine(38/39/40) in tRNA = pseudouridine(38/39/40) in tRNA. Its function is as follows. Formation of pseudouridine at positions 38, 39 and 40 in the anticodon stem and loop of transfer RNAs. This is tRNA pseudouridine synthase A from Streptococcus pneumoniae serotype 19F (strain G54).